A 233-amino-acid polypeptide reads, in one-letter code: Transcriptional regulatory protein PrrA (233 aa).

A Response regulatory domain is found at 9–123 (RVLVVDDDSD…ELVARVKALL (115 aa)). D58 is modified (4-aspartylphosphate). The segment at residues 134–232 (SETIAVGPLE…VRGVGFVLRM (99 aa)) is a DNA-binding region (ompR/PhoB-type).

In terms of processing, phosphorylated by PrrB at Asp-58.

The protein resides in the cytoplasm. In terms of biological role, member of the two-component regulatory system PrrB/PrrA that is involved specifically in early intracellular multiplication of Mycobacterium and is essential for its viability. Upon phosphorylation by PrrB, functions as a transcription regulator by direct binding to promoter regions of target genes to positively regulate their expression. Autoregulates its own expression. The chain is Transcriptional regulatory protein PrrA (prrA) from Mycobacterium leprae (strain TN).